The chain runs to 282 residues: NADPH-dependent 7-cyano-7-deazaguanine reductase (282 aa).

88–90 (IES) contacts substrate. 90 to 91 (SK) lines the NADPH pocket. Cys-190 (thioimide intermediate) is an active-site residue. The active-site Proton donor is the Asp-197. 229-230 (HE) contacts substrate. 258–259 (RG) provides a ligand contact to NADPH.

This sequence belongs to the GTP cyclohydrolase I family. QueF type 2 subfamily. In terms of assembly, homodimer.

It localises to the cytoplasm. It carries out the reaction 7-aminomethyl-7-carbaguanine + 2 NADP(+) = 7-cyano-7-deazaguanine + 2 NADPH + 3 H(+). Its pathway is tRNA modification; tRNA-queuosine biosynthesis. In terms of biological role, catalyzes the NADPH-dependent reduction of 7-cyano-7-deazaguanine (preQ0) to 7-aminomethyl-7-deazaguanine (preQ1). The chain is NADPH-dependent 7-cyano-7-deazaguanine reductase from Salmonella paratyphi C (strain RKS4594).